The primary structure comprises 47 residues: Large ribosomal subunit protein bL27c-2 (47 aa).

Belongs to the bacterial ribosomal protein bL27 family.

The protein resides in the plastid. It is found in the chloroplast. This is Large ribosomal subunit protein bL27c-2 from Cyanidium caldarium (Red alga).